Reading from the N-terminus, the 607-residue chain is Translation initiation factor IF-2 (607 aa).

The tract at residues 54 to 93 is disordered; it reads SAPQAQDSTPVAETPAAAQPAAPQAASSQPAAAQAAQAVA. Low complexity predominate over residues 62-93; it reads TPVAETPAAAQPAAPQAASSQPAAAQAAQAVA. Residues 108-281 form the tr-type G domain; the sequence is HRAPVVTIMG…ELEDLRADPK (174 aa). A G1 region spans residues 117–124; that stretch reads GHVDHGKT. Residue 117–124 coordinates GTP; sequence GHVDHGKT. Residues 142 to 146 form a G2 region; the sequence is GITQH. The interval 163-166 is G3; that stretch reads DTPG. GTP is bound by residues 163-167 and 217-220; these read DTPGH and NKVD. The G4 stretch occupies residues 217–220; that stretch reads NKVD. Residues 253–255 are G5; that stretch reads SAK.

It belongs to the TRAFAC class translation factor GTPase superfamily. Classic translation factor GTPase family. IF-2 subfamily.

The protein localises to the cytoplasm. Functionally, one of the essential components for the initiation of protein synthesis. Protects formylmethionyl-tRNA from spontaneous hydrolysis and promotes its binding to the 30S ribosomal subunits. Also involved in the hydrolysis of GTP during the formation of the 70S ribosomal complex. This is Translation initiation factor IF-2 from Deinococcus deserti (strain DSM 17065 / CIP 109153 / LMG 22923 / VCD115).